Consider the following 490-residue polypeptide: Betaine aldehyde dehydrogenase (490 aa).

Positions 26, 27, and 93 each coordinate K(+). Residue 150–152 (GAW) coordinates NAD(+). Catalysis depends on Lys-162, which acts as the Charge relay system. An NAD(+)-binding site is contributed by 176-179 (KPSE). Val-180 is a K(+) binding site. Residue 230 to 233 (GVAS) participates in NAD(+) binding. Leu-246 serves as a coordination point for K(+). Catalysis depends on Glu-252, which acts as the Proton acceptor. NAD(+) contacts are provided by Gly-254, Cys-286, and Glu-387. The active-site Nucleophile is Cys-286. Cysteine sulfenic acid (-SOH) is present on Cys-286. K(+) contacts are provided by Lys-457 and Gly-460. The Charge relay system role is filled by Glu-464.

This sequence belongs to the aldehyde dehydrogenase family. In terms of assembly, dimer of dimers. K(+) serves as cofactor.

The catalysed reaction is betaine aldehyde + NAD(+) + H2O = glycine betaine + NADH + 2 H(+). It participates in amine and polyamine biosynthesis; betaine biosynthesis via choline pathway; betaine from betaine aldehyde: step 1/1. Involved in the biosynthesis of the osmoprotectant glycine betaine. Catalyzes the irreversible oxidation of betaine aldehyde to the corresponding acid. The polypeptide is Betaine aldehyde dehydrogenase (Klebsiella pneumoniae (strain 342)).